The chain runs to 193 residues: Holliday junction branch migration complex subunit RuvA (193 aa).

The tract at residues 1 to 64 (MIGRIQGTLV…EDAQQLFGFA (64 aa)) is domain I. Residues 65–139 (TETEREAFRQ…GKLAPDLGVA (75 aa)) are domain II. The segment at 139-143 (AGGKP) is flexible linker. The segment at 144-193 (QAIETSSEVLQALLALGYSEKEALLALKQIPADTSISDGIRMGLKYLSKA) is domain III.

Belongs to the RuvA family. In terms of assembly, homotetramer. Forms an RuvA(8)-RuvB(12)-Holliday junction (HJ) complex. HJ DNA is sandwiched between 2 RuvA tetramers; dsDNA enters through RuvA and exits via RuvB. An RuvB hexamer assembles on each DNA strand where it exits the tetramer. Each RuvB hexamer is contacted by two RuvA subunits (via domain III) on 2 adjacent RuvB subunits; this complex drives branch migration. In the full resolvosome a probable DNA-RuvA(4)-RuvB(12)-RuvC(2) complex forms which resolves the HJ.

The protein resides in the cytoplasm. In terms of biological role, the RuvA-RuvB-RuvC complex processes Holliday junction (HJ) DNA during genetic recombination and DNA repair, while the RuvA-RuvB complex plays an important role in the rescue of blocked DNA replication forks via replication fork reversal (RFR). RuvA specifically binds to HJ cruciform DNA, conferring on it an open structure. The RuvB hexamer acts as an ATP-dependent pump, pulling dsDNA into and through the RuvAB complex. HJ branch migration allows RuvC to scan DNA until it finds its consensus sequence, where it cleaves and resolves the cruciform DNA. The protein is Holliday junction branch migration complex subunit RuvA of Polynucleobacter necessarius subsp. necessarius (strain STIR1).